Reading from the N-terminus, the 136-residue chain is MRHKIKGRKLNITSSHRQAMLANMAVALVTHEQIKTTLPKAKELRPYIETLITKAKKADLMVRRSVLSKIKDKTAVEKLINILGTRYKDRPGGYTRIIKAGFRYGDLAPIAYIEFVDRDINAKGNIQQDANEEIKN.

Belongs to the bacterial ribosomal protein bL17 family. As to quaternary structure, part of the 50S ribosomal subunit. Contacts protein L32.

The polypeptide is Large ribosomal subunit protein bL17 (Rickettsia conorii (strain ATCC VR-613 / Malish 7)).